Reading from the N-terminus, the 94-residue chain is Co-chaperonin GroES (94 aa).

Belongs to the GroES chaperonin family. Heptamer of 7 subunits arranged in a ring. Interacts with the chaperonin GroEL.

The protein localises to the cytoplasm. Its function is as follows. Together with the chaperonin GroEL, plays an essential role in assisting protein folding. The GroEL-GroES system forms a nano-cage that allows encapsulation of the non-native substrate proteins and provides a physical environment optimized to promote and accelerate protein folding. GroES binds to the apical surface of the GroEL ring, thereby capping the opening of the GroEL channel. This Tetragenococcus halophilus (Pediococcus halophilus) protein is Co-chaperonin GroES.